The sequence spans 148 residues: Putative transmembrane protein ORF23 (148 aa).

An N-terminal signal peptide occupies residues 1-18 (MVIILLGVSIVVPGLFLA). Over 19–118 (TETPQTNTFE…YVGWPSGAET (100 aa)) the chain is Extracellular. The helical transmembrane segment at 119–139 (IITNIADIIIMATAVMIIGAI) threads the bilayer. The Cytoplasmic segment spans residues 140–148 (YTGYKVSIK).

Its subcellular location is the host membrane. This chain is Putative transmembrane protein ORF23, found in His1 virus (isolate Australia/Victoria) (His1V).